The sequence spans 904 residues: Protein translocase subunit SecA (904 aa).

Residues Q87, 105–109 (GEGKT), and D512 contribute to the ATP site. Positions 851–904 (LAKQQQLSHESDNSALMSQEEANVAASLERKVGRNDPCPCGSGKKYKQCHGRLQ) are disordered. The span at 853–871 (KQQQLSHESDNSALMSQEE) shows a compositional bias: polar residues. Residues C888, C890, C899, and H900 each contribute to the Zn(2+) site. Residues 894 to 904 (KKYKQCHGRLQ) are compositionally biased toward basic residues.

The protein belongs to the SecA family. In terms of assembly, monomer and homodimer. Part of the essential Sec protein translocation apparatus which comprises SecA, SecYEG and auxiliary proteins SecDF-YajC and YidC. Requires Zn(2+) as cofactor.

It localises to the cell inner membrane. Its subcellular location is the cytoplasm. The enzyme catalyses ATP + H2O + cellular proteinSide 1 = ADP + phosphate + cellular proteinSide 2.. Its function is as follows. Part of the Sec protein translocase complex. Interacts with the SecYEG preprotein conducting channel. Has a central role in coupling the hydrolysis of ATP to the transfer of proteins into and across the cell membrane, serving both as a receptor for the preprotein-SecB complex and as an ATP-driven molecular motor driving the stepwise translocation of polypeptide chains across the membrane. In Yersinia enterocolitica serotype O:8 / biotype 1B (strain NCTC 13174 / 8081), this protein is Protein translocase subunit SecA.